The primary structure comprises 425 residues: Serine hydroxymethyltransferase 2 (425 aa).

Residues Leu121 and 125–127 each bind (6S)-5,6,7,8-tetrahydrofolate; that span reads GHL. Position 230 is an N6-(pyridoxal phosphate)lysine (Lys230).

It belongs to the SHMT family. As to quaternary structure, homodimer. Requires pyridoxal 5'-phosphate as cofactor.

It is found in the cytoplasm. The catalysed reaction is (6R)-5,10-methylene-5,6,7,8-tetrahydrofolate + glycine + H2O = (6S)-5,6,7,8-tetrahydrofolate + L-serine. Its pathway is one-carbon metabolism; tetrahydrofolate interconversion. It participates in amino-acid biosynthesis; glycine biosynthesis; glycine from L-serine: step 1/1. Catalyzes the reversible interconversion of serine and glycine with tetrahydrofolate (THF) serving as the one-carbon carrier. This reaction serves as the major source of one-carbon groups required for the biosynthesis of purines, thymidylate, methionine, and other important biomolecules. Also exhibits THF-independent aldolase activity toward beta-hydroxyamino acids, producing glycine and aldehydes, via a retro-aldol mechanism. The sequence is that of Serine hydroxymethyltransferase 2 from Mycobacterium tuberculosis (strain CDC 1551 / Oshkosh).